A 154-amino-acid chain; its full sequence is Myoglobin (154 aa).

One can recognise a Globin domain in the interval 2-148; it reads GLSDQEWQHV…FRNDMASKYK (147 aa). Nitrite is bound at residue His-65. His-65 serves as a coordination point for O2. Residue His-94 coordinates heme b.

This sequence belongs to the globin family. Monomeric.

Its subcellular location is the cytoplasm. It localises to the sarcoplasm. The enzyme catalyses Fe(III)-heme b-[protein] + nitric oxide + H2O = Fe(II)-heme b-[protein] + nitrite + 2 H(+). It catalyses the reaction H2O2 + AH2 = A + 2 H2O. Its function is as follows. Monomeric heme protein which primary function is to store oxygen and facilitate its diffusion within muscle tissues. Reversibly binds oxygen through a pentacoordinated heme iron and enables its timely and efficient release as needed during periods of heightened demand. Depending on the oxidative conditions of tissues and cells, and in addition to its ability to bind oxygen, it also has a nitrite reductase activity whereby it regulates the production of bioactive nitric oxide. Under stress conditions, like hypoxia and anoxia, it also protects cells against reactive oxygen species thanks to its pseudoperoxidase activity. The polypeptide is Myoglobin (MB) (Uria lomvia (Thick-billed murre)).